The chain runs to 416 residues: Squalene synthase (416 aa).

NADP(+)-binding residues include Arg-52 and Arg-77. Mg(2+) is bound by residues Asp-80, Glu-83, and Asp-84. Arg-218 serves as a coordination point for NADP(+). Residues 284-304 (SVFNFCAIPQVMAIATLAACY) traverse the membrane as a helical segment. 2 residues coordinate NADP(+): Lys-315 and Arg-317. A helical membrane pass occupies residues 384 to 404 (PIYLSFIMLLAALSWQYLSTL).

It belongs to the phytoene/squalene synthase family. Requires Mg(2+) as cofactor.

Its subcellular location is the endoplasmic reticulum membrane. The enzyme catalyses 2 (2E,6E)-farnesyl diphosphate + NADPH + H(+) = squalene + 2 diphosphate + NADP(+). It carries out the reaction 2 (2E,6E)-farnesyl diphosphate + NADH + H(+) = squalene + 2 diphosphate + NAD(+). It catalyses the reaction presqualene diphosphate + NADH + H(+) = squalene + diphosphate + NAD(+). The catalysed reaction is presqualene diphosphate + NADPH + H(+) = squalene + diphosphate + NADP(+). The enzyme catalyses 2 (2E,6E)-farnesyl diphosphate = presqualene diphosphate + diphosphate. It participates in terpene metabolism; lanosterol biosynthesis; lanosterol from farnesyl diphosphate: step 1/3. Functionally, catalyzes the condensation of 2 farnesyl pyrophosphate (FPP) moieties to form squalene. Proceeds in two distinct steps. In the first half-reaction, two molecules of FPP react to form the stable presqualene diphosphate intermediate (PSQPP), with concomitant release of a proton and a molecule of inorganic diphosphate. In the second half-reaction, PSQPP undergoes heterolysis, isomerization, and reduction with NADPH or NADH to form squalene. It is the first committed enzyme of the sterol biosynthesis pathway. The polypeptide is Squalene synthase (Fdft1) (Mus musculus (Mouse)).